Reading from the N-terminus, the 101-residue chain is Integration host factor subunit alpha (101 aa).

This sequence belongs to the bacterial histone-like protein family. Heterodimer of an alpha and a beta chain.

In terms of biological role, this protein is one of the two subunits of integration host factor, a specific DNA-binding protein that functions in genetic recombination as well as in transcriptional and translational control. The protein is Integration host factor subunit alpha of Alkalilimnicola ehrlichii (strain ATCC BAA-1101 / DSM 17681 / MLHE-1).